The primary structure comprises 886 residues: UPF0592 membrane protein C7D4.03c (886 aa).

A disordered region spans residues Ile87–Ser112. Residues Ser95–Ser112 are compositionally biased toward low complexity. 3 helical membrane passes run Phe277–Leu297, Gly374–Phe394, and Val400–Ser420.

This sequence belongs to the UPF0592 family.

It is found in the membrane. This chain is UPF0592 membrane protein C7D4.03c, found in Schizosaccharomyces pombe (strain 972 / ATCC 24843) (Fission yeast).